A 120-amino-acid polypeptide reads, in one-letter code: Large ribosomal subunit protein bL19 (120 aa).

The protein belongs to the bacterial ribosomal protein bL19 family.

Its function is as follows. This protein is located at the 30S-50S ribosomal subunit interface and may play a role in the structure and function of the aminoacyl-tRNA binding site. This Dichelobacter nodosus (strain VCS1703A) protein is Large ribosomal subunit protein bL19.